Reading from the N-terminus, the 402-residue chain is Elongation factor Tu (402 aa).

Positions K10–E212 constitute a tr-type G domain. The interval G19 to T26 is G1. G19–T26 serves as a coordination point for GTP. T26 contributes to the Mg(2+) binding site. The G2 stretch occupies residues G60–A64. The interval D81–G84 is G3. GTP-binding positions include D81–H85 and N136–D139. Residues N136–D139 are G4. Residues S177 to F179 are G5.

Belongs to the TRAFAC class translation factor GTPase superfamily. Classic translation factor GTPase family. EF-Tu/EF-1A subfamily. In terms of assembly, monomer.

The protein resides in the cytoplasm. The catalysed reaction is GTP + H2O = GDP + phosphate + H(+). In terms of biological role, GTP hydrolase that promotes the GTP-dependent binding of aminoacyl-tRNA to the A-site of ribosomes during protein biosynthesis. In Aliarcobacter butzleri (strain RM4018) (Arcobacter butzleri), this protein is Elongation factor Tu.